The following is a 257-amino-acid chain: MNPLIIKLGGVLLDSEEALERLFTALVNYRESHQRPLVIVHGGGCVVDELMKGLNLPVKKKDGLRVTPADQIGIITGALAGTANKTLLAWAKKHHIASVGLFLGDGDSVNVTQLDEALGHVGLAQPGSPKLINMLLENGFLPVVSSIGVTEDGQLMNVNADQAATALAATLGADLILLSDVSGILDGKGQRIAEMTASKAEQLIDQGIITDGMIVKVNAALDAARALGRPVDIASWRHAEQLPALFNGTPIGTRILA.

Residues 43–44 (GG), Arg65, and Asn157 contribute to the substrate site. Residues 180–185 (DVSGIL) and 208–210 (IIT) each bind ATP.

This sequence belongs to the acetylglutamate kinase family. ArgB subfamily. As to quaternary structure, homodimer.

Its subcellular location is the cytoplasm. It catalyses the reaction N-acetyl-L-glutamate + ATP = N-acetyl-L-glutamyl 5-phosphate + ADP. It participates in amino-acid biosynthesis; L-arginine biosynthesis; N(2)-acetyl-L-ornithine from L-glutamate: step 2/4. Functionally, catalyzes the ATP-dependent phosphorylation of N-acetyl-L-glutamate. The protein is Acetylglutamate kinase of Salmonella agona (strain SL483).